Here is a 156-residue protein sequence, read N- to C-terminus: ATP synthase subunit b', chloroplastic (156 aa).

A helical membrane pass occupies residues 24–44 (ATLPLVAIQFILLMVLLNILL).

The protein belongs to the ATPase B chain family. In terms of assembly, F-type ATPases have 2 components, F(1) - the catalytic core - and F(0) - the membrane proton channel. F(1) has five subunits: alpha(3), beta(3), gamma(1), delta(1), epsilon(1). F(0) has four main subunits: a(1), b(1), b'(1) and c(10-14). The alpha and beta chains form an alternating ring which encloses part of the gamma chain. F(1) is attached to F(0) by a central stalk formed by the gamma and epsilon chains, while a peripheral stalk is formed by the delta, b and b' chains.

It localises to the plastid. The protein resides in the chloroplast thylakoid membrane. In terms of biological role, f(1)F(0) ATP synthase produces ATP from ADP in the presence of a proton or sodium gradient. F-type ATPases consist of two structural domains, F(1) containing the extramembraneous catalytic core and F(0) containing the membrane proton channel, linked together by a central stalk and a peripheral stalk. During catalysis, ATP synthesis in the catalytic domain of F(1) is coupled via a rotary mechanism of the central stalk subunits to proton translocation. Functionally, component of the F(0) channel, it forms part of the peripheral stalk, linking F(1) to F(0). The b'-subunit is a diverged and duplicated form of b found in plants and photosynthetic bacteria. In Phaeodactylum tricornutum (strain CCAP 1055/1), this protein is ATP synthase subunit b', chloroplastic.